Here is a 361-residue protein sequence, read N- to C-terminus: ATP-dependent 6-phosphofructokinase 1 (361 aa).

ATP contacts are provided by residues Gly-14, Lys-79–Gly-80, and Gly-116–Ser-119. Asp-117 serves as a coordination point for Mg(2+). Residues Thr-140–Asp-142, Arg-177, Met-184–Arg-186, Glu-237, Arg-278, and His-284–Arg-287 each bind substrate. Catalysis depends on Asp-142, which acts as the Proton acceptor.

The protein belongs to the phosphofructokinase type A (PFKA) family. Mixed-substrate PFK group III subfamily. In terms of assembly, homodimer or homotetramer. The cofactor is Mg(2+).

The protein resides in the cytoplasm. The catalysed reaction is beta-D-fructose 6-phosphate + ATP = beta-D-fructose 1,6-bisphosphate + ADP + H(+). It participates in carbohydrate degradation; glycolysis; D-glyceraldehyde 3-phosphate and glycerone phosphate from D-glucose: step 3/4. Its function is as follows. Catalyzes the phosphorylation of D-fructose 6-phosphate to fructose 1,6-bisphosphate by ATP, the first committing step of glycolysis. This is ATP-dependent 6-phosphofructokinase 1 from Synechocystis sp. (strain ATCC 27184 / PCC 6803 / Kazusa).